The primary structure comprises 439 residues: Xylose isomerase (439 aa).

Residues His-103 and Asp-106 contribute to the active site. Mg(2+) is bound by residues Glu-234, Glu-270, His-273, Asp-298, Asp-309, Asp-311, and Asp-341.

It belongs to the xylose isomerase family. In terms of assembly, homotetramer. It depends on Mg(2+) as a cofactor.

It is found in the cytoplasm. It catalyses the reaction alpha-D-xylose = alpha-D-xylulofuranose. This is Xylose isomerase from Bacteroides fragilis (strain ATCC 25285 / DSM 2151 / CCUG 4856 / JCM 11019 / LMG 10263 / NCTC 9343 / Onslow / VPI 2553 / EN-2).